We begin with the raw amino-acid sequence, 680 residues long: Extracellular matrix protein 2 (680 aa).

The N-terminal stretch at 1–20 (MKFSSLYCFLLLLIFQTDFG) is a signal peptide. Residues 100–157 (GHCLANGMIMYNKAVWSPEPCTTCLCLNGKVLCDETKCHPQMCPQTIIPEGECCPVCS) form the VWFC domain. Over residues 189-198 (QLEEDEEEVK) the composition is skewed to acidic residues. The disordered stretch occupies residues 189–293 (QLEEDEEEVK…RLPIPATPRG (105 aa)). Basic and acidic residues predominate over residues 223–238 (QSREGKAQRPEEEGRQ). Positions 249–272 (NEEDDDEEEEDDDDEEEDDDDEDE) are enriched in acidic residues. The Cell attachment site signature appears at 275 to 277 (RGD). Residues 288–325 (PATPRGIPSLPSMCSLSYKTISCISADLTQIPPLTAPE) enclose the LRRNT domain. 13 LRR repeats span residues 349-369 (NLER…GPKA), 375-396 (NLMR…LPST), 397-417 (LEEL…SLSD), 420-440 (QLVT…NSLA), 446-466 (SLSY…GLPA), 467-488 (SIEE…SFNH), 491-511 (KINV…APLA), 517-538 (NLES…LPKS), 539-559 (LVHL…VFGH), 563-583 (GLEY…DRVS), 590-611 (SLRE…VQEM), 613-634 (ALHF…QICN), and 642-665 (NLQH…AFSC). N-linked (GlcNAc...) asparagine glycosylation is present at Asn359. Asn430 is a glycosylation site (N-linked (GlcNAc...) asparagine). Asn487 carries N-linked (GlcNAc...) asparagine glycosylation.

Belongs to the small leucine-rich proteoglycan (SLRP) family. SLRP class I subfamily. As to quaternary structure, interacts with numerous extracellular matrix proteins. Interacts with MSL1 and RASSF1.

The protein localises to the secreted. It is found in the extracellular space. The protein resides in the extracellular matrix. Functionally, promotes matrix assembly and cell adhesiveness. The polypeptide is Extracellular matrix protein 2 (ECM2) (Bos taurus (Bovine)).